Reading from the N-terminus, the 550-residue chain is Glucose-6-phosphate isomerase 1 (550 aa).

The active-site Proton donor is the Glu355. Residues His386 and Lys512 contribute to the active site.

The protein belongs to the GPI family.

It is found in the cytoplasm. It carries out the reaction alpha-D-glucose 6-phosphate = beta-D-fructose 6-phosphate. It functions in the pathway carbohydrate biosynthesis; gluconeogenesis. The protein operates within carbohydrate degradation; glycolysis; D-glyceraldehyde 3-phosphate and glycerone phosphate from D-glucose: step 2/4. In terms of biological role, catalyzes the reversible isomerization of glucose-6-phosphate to fructose-6-phosphate. This chain is Glucose-6-phosphate isomerase 1, found in Rhodococcus jostii (strain RHA1).